The chain runs to 429 residues: MATLIKNGNLYQAGRIYQADVLIEDGKIKAIGKNLSDVVKENLVEIDATNKLVAPGLVDVHVHYRDPGFTYKETIHTGSLAAAHGGYTTVCAMPNLDPVPDTPELVEKMCSRNQEDGVVKVKQYGSITHGLKSEELVDFVGMKKAGAFAFSNDGSGVQTAGTMYQAMKSAAALNMAIVAHVEDNSLLFGGVMNAGKRADELGLPGILGISESSQIARDLLLAKETGVHYHVCHVSTKESVELVRLAKQHKINVTCEVSPHHLLLADVDIPGNDPYYKMNPPLRGVEDRQALIDSLLDGTIDMIATDHAPHSIDEKTGDMREASFGITGSETAFAMLYTKFVKTGIFTLEQLLQWMSINPAEKFGMEDAGELLPGKSADLAIFDLNKEYVIKEEDYLSKGINTPFTGEKVYGQTVLTMVDGQKVYQREEK.

Residues H61 and H63 each contribute to the Zn(2+) site. Residues 63 to 65 (HYR) and N95 each bind substrate. Zn(2+) contacts are provided by D153, H180, and H233. N279 serves as a coordination point for substrate. D306 is a binding site for Zn(2+). D306 is an active-site residue. Substrate is bound by residues H310 and 324–325 (FG).

It belongs to the metallo-dependent hydrolases superfamily. DHOase family. Class I DHOase subfamily. The cofactor is Zn(2+).

The enzyme catalyses (S)-dihydroorotate + H2O = N-carbamoyl-L-aspartate + H(+). It participates in pyrimidine metabolism; UMP biosynthesis via de novo pathway; (S)-dihydroorotate from bicarbonate: step 3/3. In terms of biological role, catalyzes the reversible cyclization of carbamoyl aspartate to dihydroorotate. This Ligilactobacillus salivarius (strain UCC118) (Lactobacillus salivarius) protein is Dihydroorotase.